A 520-amino-acid chain; its full sequence is Trichothecene O-acetyltransferase TRI3 (520 aa).

A disordered region spans residues M1–V23. Residues S12 to V23 are compositionally biased toward basic and acidic residues.

This sequence belongs to the trichothecene O-acetyltransferase family.

The protein operates within sesquiterpene biosynthesis; trichothecene biosynthesis. Trichothecene O-acetyltransferase; part of the gene cluster that mediates the production of the antimicrobial trichothecene harzianum A (HA) that plays a role in Botrytis cinerea antagonistic activity and plant defense priming. The biosynthesis of harzianum A begins with the cyclization of farnesyl diphosphate to trichodiene and is catalyzed by the trichodiene synthase TRI5. Trichodiene undergoes a series of oxygenations catalyzed by the cytochrome P450 monooxygenase TRI4. TRI4 controls the addition of 3 oxygens at C-2, C-11, and the C-12, C-13-epoxide to form the intermediate isotrichodiol. Isotrichodiol then undergoes a non-enzymatic isomerization and cyclization to form 12,13-epoxytrichothec-9-ene (EPT) which is further converted to trichodermol by the cytochrome P450 monooxygenase TRI11 via C-4 hydroxylation. The last step of HA synthesis is esterification of an octatriendioyl moiety to the C-4 oxygen of trichodermol. The octatriendioyl moiety is probably produced by the polyketide synthase TRI17 and the esterification performed by the trichothecene O-acetyltransferase TRI3. This Trichoderma arundinaceum protein is Trichothecene O-acetyltransferase TRI3.